The chain runs to 157 residues: Arginine regulator (157 aa).

Belongs to the ArgR family.

The protein localises to the cytoplasm. Its pathway is amino-acid degradation; L-arginine degradation via ADI pathway. Its function is as follows. Regulates the transcription of the arc operon, involved in arginine catabolism. This Streptococcus pyogenes serotype M3 (strain ATCC BAA-595 / MGAS315) protein is Arginine regulator (argR1).